Consider the following 122-residue polypeptide: Co-chaperonin GroES (122 aa).

It belongs to the GroES chaperonin family. Heptamer of 7 subunits arranged in a ring. Interacts with the chaperonin GroEL.

It localises to the cytoplasm. Functionally, together with the chaperonin GroEL, plays an essential role in assisting protein folding. The GroEL-GroES system forms a nano-cage that allows encapsulation of the non-native substrate proteins and provides a physical environment optimized to promote and accelerate protein folding. GroES binds to the apical surface of the GroEL ring, thereby capping the opening of the GroEL channel. This is Co-chaperonin GroES from Aquifex aeolicus (strain VF5).